We begin with the raw amino-acid sequence, 204 residues long: Sec-independent protein translocase protein TatB (204 aa).

Residues 1–21 form a helical membrane-spanning segment; it reads MFDIGFSELLLIFIVGLVVLG. Over residues 154-166 the composition is skewed to polar residues; it reads VVSSVDSIQNGQS. A disordered region spans residues 154-204; sequence VVSSVDSIQNGQSDLELDAQAEVDRQLAAMMDKYAPPDDVAENPISTEKTS.

This sequence belongs to the TatB family. The Tat system comprises two distinct complexes: a TatABC complex, containing multiple copies of TatA, TatB and TatC subunits, and a separate TatA complex, containing only TatA subunits. Substrates initially bind to the TatABC complex, which probably triggers association of the separate TatA complex to form the active translocon.

The protein resides in the cell inner membrane. Functionally, part of the twin-arginine translocation (Tat) system that transports large folded proteins containing a characteristic twin-arginine motif in their signal peptide across membranes. Together with TatC, TatB is part of a receptor directly interacting with Tat signal peptides. TatB may form an oligomeric binding site that transiently accommodates folded Tat precursor proteins before their translocation. The protein is Sec-independent protein translocase protein TatB of Mannheimia succiniciproducens (strain KCTC 0769BP / MBEL55E).